An 832-amino-acid chain; its full sequence is DNA polymerase I, thermostable (832 aa).

The 5'-3' exonuclease domain occupies 175–260; sequence RPDQWADYRA…DLPLEVDFAK (86 aa). The tract at residues 410–832 is polymerase; it reads ERLFANLWGR…IGEDWLSAKE (423 aa).

It belongs to the DNA polymerase type-A family.

The enzyme catalyses DNA(n) + a 2'-deoxyribonucleoside 5'-triphosphate = DNA(n+1) + diphosphate. Functionally, in addition to polymerase activity, this DNA polymerase exhibits 5'-3' exonuclease activity. Unlikely to have 3'-5' exonuclease activity due to absence of a 3'-5' exonuclease domain. This Thermus aquaticus protein is DNA polymerase I, thermostable (polA).